The primary structure comprises 424 residues: Serine--tRNA ligase (424 aa).

230–232 contacts L-serine; that stretch reads TAE. Residue 261 to 263 participates in ATP binding; that stretch reads RSE. E284 is an L-serine binding site. Position 348-351 (348-351) interacts with ATP; it reads EISS. S384 contributes to the L-serine binding site.

Belongs to the class-II aminoacyl-tRNA synthetase family. Type-1 seryl-tRNA synthetase subfamily. In terms of assembly, homodimer. The tRNA molecule binds across the dimer.

The protein resides in the cytoplasm. It carries out the reaction tRNA(Ser) + L-serine + ATP = L-seryl-tRNA(Ser) + AMP + diphosphate + H(+). It catalyses the reaction tRNA(Sec) + L-serine + ATP = L-seryl-tRNA(Sec) + AMP + diphosphate + H(+). It functions in the pathway aminoacyl-tRNA biosynthesis; selenocysteinyl-tRNA(Sec) biosynthesis; L-seryl-tRNA(Sec) from L-serine and tRNA(Sec): step 1/1. Its function is as follows. Catalyzes the attachment of serine to tRNA(Ser). Is also able to aminoacylate tRNA(Sec) with serine, to form the misacylated tRNA L-seryl-tRNA(Sec), which will be further converted into selenocysteinyl-tRNA(Sec). The sequence is that of Serine--tRNA ligase from Desulfatibacillum aliphaticivorans.